The sequence spans 333 residues: Transcription termination factor MTERF6, chloroplastic/mitochondrial (333 aa).

Belongs to the mTERF family.

It is found in the plastid. The protein localises to the chloroplast. The protein resides in the mitochondrion. Its function is as follows. Transcription termination factor essential for chloroplast development. Required for maturation of 16S rRNA, 18S rRNA and 23S rRNA in the chloroplast. Binds to a specific region within the tRNA(Ile)(GAU) gene at a position adjacent to and downstream of the 16S rRNA gene. Required for the maturation of tRNA(Ile)(GAU). Binds to double-stranded DNA. In Arabidopsis thaliana (Mouse-ear cress), this protein is Transcription termination factor MTERF6, chloroplastic/mitochondrial.